A 1293-amino-acid chain; its full sequence is DNA-directed RNA polymerase subunit beta' (1293 aa).

Positions 60, 62, 75, and 78 each coordinate Zn(2+). Mg(2+) is bound by residues D535, D537, and D539. 4 residues coordinate Zn(2+): C873, C950, C957, and C960.

Belongs to the RNA polymerase beta' chain family. The RNAP catalytic core consists of 2 alpha, 1 beta, 1 beta' and 1 omega subunit. When a sigma factor is associated with the core the holoenzyme is formed, which can initiate transcription. Mg(2+) serves as cofactor. It depends on Zn(2+) as a cofactor.

It carries out the reaction RNA(n) + a ribonucleoside 5'-triphosphate = RNA(n+1) + diphosphate. Its function is as follows. DNA-dependent RNA polymerase catalyzes the transcription of DNA into RNA using the four ribonucleoside triphosphates as substrates. The chain is DNA-directed RNA polymerase subunit beta' from Cutibacterium acnes (strain DSM 16379 / KPA171202) (Propionibacterium acnes).